Here is a 389-residue protein sequence, read N- to C-terminus: GDP-fucose protein O-fucosyltransferase 1 (389 aa).

The signal sequence occupies residues 1–21 (MRVSKVLTLASFISVCSYSEA). N24 carries an N-linked (GlcNAc...) asparagine glycan. An intrachain disulfide couples C35 to C37. Residue 40–43 (RFGN) coordinates substrate. C119 and C135 are disulfide-bonded. Position 238 to 240 (238 to 240 (HLR)) interacts with substrate. Cystine bridges form between C249–C281 and C266–C353. Substrate is bound at residue 356–357 (TF).

It belongs to the glycosyltransferase 65 family. As to quaternary structure, monomer.

The protein localises to the endoplasmic reticulum. It catalyses the reaction L-seryl-[protein] + GDP-beta-L-fucose = 3-O-(alpha-L-fucosyl)-L-seryl-[protein] + GDP + H(+). The catalysed reaction is L-threonyl-[protein] + GDP-beta-L-fucose = 3-O-(alpha-L-fucosyl)-L-threonyl-[protein] + GDP + H(+). It participates in protein modification; protein glycosylation. Its function is as follows. Catalyzes the reaction that attaches fucose through an O-glycosidic linkage to a conserved serine or threonine residue found in the consensus sequence C2-X(4,5)-[S/T]-C3 of EGF domains, where C2 and C3 are the second and third conserved cysteines. Specifically uses GDP-fucose as donor substrate and proper disulfide pairing of the substrate EGF domains is required for fucose transfer. This chain is GDP-fucose protein O-fucosyltransferase 1, found in Caenorhabditis elegans.